Reading from the N-terminus, the 429-residue chain is Glucose-6-phosphate isomerase (429 aa).

Glu-282 (proton donor) is an active-site residue. Active-site residues include His-303 and Lys-418.

This sequence belongs to the GPI family.

It is found in the cytoplasm. The catalysed reaction is alpha-D-glucose 6-phosphate = beta-D-fructose 6-phosphate. It participates in carbohydrate biosynthesis; gluconeogenesis. It functions in the pathway carbohydrate degradation; glycolysis; D-glyceraldehyde 3-phosphate and glycerone phosphate from D-glucose: step 2/4. Functionally, catalyzes the reversible isomerization of glucose-6-phosphate to fructose-6-phosphate. The sequence is that of Glucose-6-phosphate isomerase from Mesomycoplasma hyopneumoniae (strain 7448) (Mycoplasma hyopneumoniae).